The chain runs to 295 residues: MSKIIGSDRVKRGMAEMQKGGVIMDVVNAEQARIAEEAGAVAVMALERVPSDIRAAGGVARMANPKIVEEVMNAVSIPVMAKARIGHITEARVLEAMGVDYIDESEVLTPADEEYHLRKDQFTVPFVCGCRNLGEAARRIGEGAAMLRTKGEPGTGNIVEAVRHMRQVNSEVSRLTVMNDDEIMTFAKDIGAPYEILKQIKDNGRLPVVNFAAGGVATPQDAALMMELGADGVFVGSGIFKSEDPEKFAKAIVQATTHYQDYELIGRLASELGTAMKGLDINQLSLEERMQERGW.

Aspartate 25 contacts D-ribose 5-phosphate. Lysine 82 functions as the Schiff-base intermediate with D-ribose 5-phosphate in the catalytic mechanism. Glycine 154 lines the D-ribose 5-phosphate pocket. Arginine 166 is a binding site for D-glyceraldehyde 3-phosphate. D-ribose 5-phosphate is bound by residues glycine 215 and 236–237 (GS).

The protein belongs to the PdxS/SNZ family. In the presence of PdxT, forms a dodecamer of heterodimers.

The catalysed reaction is aldehydo-D-ribose 5-phosphate + D-glyceraldehyde 3-phosphate + L-glutamine = pyridoxal 5'-phosphate + L-glutamate + phosphate + 3 H2O + H(+). The protein operates within cofactor biosynthesis; pyridoxal 5'-phosphate biosynthesis. Catalyzes the formation of pyridoxal 5'-phosphate from ribose 5-phosphate (RBP), glyceraldehyde 3-phosphate (G3P) and ammonia. The ammonia is provided by the PdxT subunit. Can also use ribulose 5-phosphate and dihydroxyacetone phosphate as substrates, resulting from enzyme-catalyzed isomerization of RBP and G3P, respectively. The protein is Pyridoxal 5'-phosphate synthase subunit PdxS of Staphylococcus aureus (strain Mu3 / ATCC 700698).